We begin with the raw amino-acid sequence, 420 residues long: Dihydrolipoyllysine-residue succinyltransferase component of 2-oxoglutarate dehydrogenase complex (420 aa).

The Lipoyl-binding domain maps to 1–76 (MAEVKVPELA…EVGQAVAVVG (76 aa)). Lysine 42 bears the N6-lipoyllysine mark. Positions 75–201 (VGEGQVNTSN…EKMSRRKKTA (127 aa)) are disordered. Residues 81–90 (NTSNDSSNES) show a composition bias toward polar residues. The span at 91–102 (SQKDEAKEKETP) shows a compositional bias: basic and acidic residues. Residues 103 to 127 (KQSNPNSSESENTQDNSQQRINATP) show a composition bias toward polar residues. In terms of domain architecture, Peripheral subunit-binding (PSBD) spans 124–160 (NATPSARRHARKNGVDLSEVSGKGNDVLRKDDVENSQ). Residues 149 to 158 (DVLRKDDVEN) show a composition bias toward basic and acidic residues. Positions 159–188 (SQKSSSQTAKSESKSQNSGSKQSNNNPSKP) are enriched in low complexity. Residues histidine 391 and aspartate 395 contribute to the active site.

This sequence belongs to the 2-oxoacid dehydrogenase family. In terms of assembly, forms a 24-polypeptide structural core with octahedral symmetry. Part of the 2-oxoglutarate dehydrogenase (OGDH) complex composed of E1 (2-oxoglutarate dehydrogenase), E2 (dihydrolipoamide succinyltransferase) and E3 (dihydrolipoamide dehydrogenase); the complex contains multiple copies of the three enzymatic components (E1, E2 and E3). It depends on (R)-lipoate as a cofactor.

It carries out the reaction N(6)-[(R)-dihydrolipoyl]-L-lysyl-[protein] + succinyl-CoA = N(6)-[(R)-S(8)-succinyldihydrolipoyl]-L-lysyl-[protein] + CoA. It functions in the pathway amino-acid degradation; L-lysine degradation via saccharopine pathway; glutaryl-CoA from L-lysine: step 6/6. In terms of biological role, E2 component of the 2-oxoglutarate dehydrogenase (OGDH) complex which catalyzes the second step in the conversion of 2-oxoglutarate to succinyl-CoA and CO(2). This is Dihydrolipoyllysine-residue succinyltransferase component of 2-oxoglutarate dehydrogenase complex (odhB) from Staphylococcus epidermidis (strain ATCC 12228 / FDA PCI 1200).